The primary structure comprises 289 residues: Phosphatidylserine decarboxylase proenzyme (289 aa).

Residues Asp92, His149, and Ser254 each act as charge relay system; for autoendoproteolytic cleavage activity in the active site. Ser254 acts as the Schiff-base intermediate with substrate; via pyruvic acid; for decarboxylase activity in catalysis. Position 254 is a pyruvic acid (Ser); by autocatalysis (Ser254).

This sequence belongs to the phosphatidylserine decarboxylase family. PSD-B subfamily. Prokaryotic type I sub-subfamily. As to quaternary structure, heterodimer of a large membrane-associated beta subunit and a small pyruvoyl-containing alpha subunit. It depends on pyruvate as a cofactor. Post-translationally, is synthesized initially as an inactive proenzyme. Formation of the active enzyme involves a self-maturation process in which the active site pyruvoyl group is generated from an internal serine residue via an autocatalytic post-translational modification. Two non-identical subunits are generated from the proenzyme in this reaction, and the pyruvate is formed at the N-terminus of the alpha chain, which is derived from the carboxyl end of the proenzyme. The autoendoproteolytic cleavage occurs by a canonical serine protease mechanism, in which the side chain hydroxyl group of the serine supplies its oxygen atom to form the C-terminus of the beta chain, while the remainder of the serine residue undergoes an oxidative deamination to produce ammonia and the pyruvoyl prosthetic group on the alpha chain. During this reaction, the Ser that is part of the protease active site of the proenzyme becomes the pyruvoyl prosthetic group, which constitutes an essential element of the active site of the mature decarboxylase.

It localises to the cell membrane. It carries out the reaction a 1,2-diacyl-sn-glycero-3-phospho-L-serine + H(+) = a 1,2-diacyl-sn-glycero-3-phosphoethanolamine + CO2. It functions in the pathway phospholipid metabolism; phosphatidylethanolamine biosynthesis; phosphatidylethanolamine from CDP-diacylglycerol: step 2/2. In terms of biological role, catalyzes the formation of phosphatidylethanolamine (PtdEtn) from phosphatidylserine (PtdSer). The protein is Phosphatidylserine decarboxylase proenzyme of Pseudomonas aeruginosa (strain UCBPP-PA14).